Here is a 316-residue protein sequence, read N- to C-terminus: Secondary metabolism regulator LAE1 (316 aa).

This sequence belongs to the methyltransferase superfamily. LaeA methyltransferase family. Component of the heterotrimeric velvet complex composed of LAE1, VEL1 and VEL2; VEL1 acting as a bridging protein between LAE1 and VEL2. Interacts with VEL1.

The protein localises to the nucleus. It carries out the reaction L-methionyl-[protein] + S-adenosyl-L-methionine = S-methyl-L-methionyl-[protein] + S-adenosyl-L-homocysteine. Functionally, methyltransferase that performs automethylation. No other methyl-accepting substrate has been identified yet. Component of the velvet transcription factor complex that acts as a global regulator for secondary metabolite gene expression. Controls the expression of the gibberellins gene clusters, but does not affect bikaverin production. Controls the expression of the fusaric acid gene cluster. Acts as a virulence factors during infection, most likely through activation of gibberellins biosynthesis. The chain is Secondary metabolism regulator LAE1 from Gibberella fujikuroi (strain CBS 195.34 / IMI 58289 / NRRL A-6831) (Bakanae and foot rot disease fungus).